The sequence spans 953 residues: Trafficking kinesin-binding protein 1 (953 aa).

In terms of domain architecture, HAP1 N-terminal spans L47 to T354. Positions Q104–P356 form a coiled coil. The tract at residues T359–Y509 is interaction with HGS. O-linked (GlcNAc) serine glycosylation is present at S447. Residues A472 to L495 are disordered. Residues S492–E532 are a coiled coil. S537 carries the post-translational modification Phosphoserine. The interaction with OGT stretch occupies residues P658–T672. 2 O-linked (GlcNAc) serine glycosylation sites follow: S680 and S719. Phosphoserine is present on S719. The disordered stretch occupies residues V777–S796. Residues P786–S796 show a composition bias toward low complexity. At S919 the chain carries Phosphoserine. The O-linked (GlcNAc) threonine glycan is linked to T935.

This sequence belongs to the milton family. Interacts with RHOT1 and RHOT2. Found in a complex with KIF5B, OGT, RHOT1 and RHOT2. Interacts with HGS. Interacts with GABRA1. Interacts with KIF5C. Interacts with OGT; stable interaction is not required for glycosylation of this protein by OGT. Isoform 1 interacts with OGT. O-glycosylated. Glycosylated by OGT; glycosylation in response to increased extracellular glucose levels is required for and leads to regulation of mitochondrial motility by OGT. As to expression, high expression in spinal cord and moderate expression in all other tissues and specific brain regions examined. Expressed in all cell lines examined.

It is found in the cytoplasm. It localises to the nucleus. Its subcellular location is the mitochondrion. The protein localises to the early endosome. The protein resides in the endosome. It is found in the mitochondrion membrane. It localises to the cell cortex. In terms of biological role, involved in the regulation of endosome-to-lysosome trafficking, including endocytic trafficking of EGF-EGFR complexes and GABA-A receptors. Involved in mitochondrial motility. When O-glycosylated, abolishes mitochondrial motility. Crucial for recruiting OGT to the mitochondrial surface of neuronal processes. TRAK1 and RHOT form an essential protein complex that links KIF5 to mitochondria for light chain-independent, anterograde transport of mitochondria. The sequence is that of Trafficking kinesin-binding protein 1 (TRAK1) from Homo sapiens (Human).